Here is a 654-residue protein sequence, read N- to C-terminus: ATP-dependent rRNA helicase spb-4 (654 aa).

The Q motif signature appears at 17–45 (WDALTPPLAQWILDYLSSMGFTQPTPVQK). Residues 48–249 (LELFRGNKDV…TVGLLYPHKI (202 aa)) enclose the Helicase ATP-binding domain. Residue 61-68 (AVTGSGKT) coordinates ATP. The DEAD box motif lies at 197–200 (DEAD). In terms of domain architecture, Helicase C-terminal spans 286–444 (AIVQLLEKLE…VTPDEVERVS (159 aa)). A coiled-coil region spans residues 531–631 (REKKRQEELA…EERAAALAAN (101 aa)). Basic and acidic residues predominate over residues 542-577 (WKEEKAKRAQEENTGDKRKKNEAWSGKAEQEETKLQ). Residues 542–654 (WKEEKAKRAQ…SDEEFGGFDD (113 aa)) form a disordered region. Positions 578–588 (RREKKRRKREA) are enriched in basic residues. The span at 589 to 625 (KKFSEMTEKEKEEHLKLEQMIEEVRKRNEAKAAEERA) shows a compositional bias: basic and acidic residues. Residues 644–654 (DSDEEFGGFDD) are compositionally biased toward acidic residues.

Belongs to the DEAD box helicase family. DDX55/SPB4 subfamily. Component of pre-60S ribosomal complexes.

The protein resides in the nucleus. The protein localises to the nucleolus. It catalyses the reaction ATP + H2O = ADP + phosphate + H(+). Its function is as follows. ATP-binding RNA helicase involved in the biogenesis of 60S ribosomal subunits. Binds 90S pre-ribosomal particles and dissociates from pre-60S ribosomal particles after processing of 27SB pre-rRNA. Required for the normal formation of 18S rRNA through the processing of pre-rRNAs at sites A0, A1 and A2, and the normal formation of 25S and 5.8S rRNAs through the processing of pre-rRNAs at sites C1 and C2. The chain is ATP-dependent rRNA helicase spb-4 from Neurospora crassa (strain ATCC 24698 / 74-OR23-1A / CBS 708.71 / DSM 1257 / FGSC 987).